Here is a 363-residue protein sequence, read N- to C-terminus: Dihydroorotate dehydrogenase (quinone) (363 aa).

FMN contacts are provided by residues Ala-67–Lys-71 and Thr-91. Position 71 (Lys-71) interacts with substrate. Asn-116–Phe-120 lines the substrate pocket. Residues Asn-156 and Asn-189 each coordinate FMN. Position 189 (Asn-189) interacts with substrate. Ser-192 functions as the Nucleophile in the catalytic mechanism. Asn-194 serves as a coordination point for substrate. Residues Lys-231 and Thr-259 each contribute to the FMN site. Substrate is bound at residue Asn-260 to Thr-261. FMN is bound by residues Gly-287, Gly-316, and Tyr-337 to Thr-338.

Belongs to the dihydroorotate dehydrogenase family. Type 2 subfamily. Monomer. The cofactor is FMN.

It is found in the cell membrane. It catalyses the reaction (S)-dihydroorotate + a quinone = orotate + a quinol. It functions in the pathway pyrimidine metabolism; UMP biosynthesis via de novo pathway; orotate from (S)-dihydroorotate (quinone route): step 1/1. Functionally, catalyzes the conversion of dihydroorotate to orotate with quinone as electron acceptor. In Kocuria rhizophila (strain ATCC 9341 / DSM 348 / NBRC 103217 / DC2201), this protein is Dihydroorotate dehydrogenase (quinone).